An 894-amino-acid polypeptide reads, in one-letter code: Nitrate reductase [NADPH] (894 aa).

Residues 1-79 (MAVKSQLGVT…PEDLKTPDHR (79 aa)) are disordered. The span at 7–16 (LGVTYTTKTF) shows a compositional bias: polar residues. Positions 69–79 (LPEDLKTPDHR) are enriched in basic and acidic residues. Cys-169 is a Mo-molybdopterin binding site. Residues 535-610 (VRIISLEELK…MPQYHIGTLN (76 aa)) form the Cytochrome b5 heme-binding domain. Residues His-570 and His-593 each coordinate heme. The region spanning 638 to 749 (KYWSKAILET…KGPVGKFEYL (112 aa)) is the FAD-binding FR-type domain. Residues 692-695 (RAYT), 709-713 (LIKIY), 723-725 (KMT), Ser-773, and Thr-776 contribute to the FAD site.

This sequence belongs to the nitrate reductase family. In terms of assembly, homodimer. FAD is required as a cofactor. Heme serves as cofactor. The cofactor is Mo-molybdopterin.

It carries out the reaction nitrite + NADP(+) + H2O = nitrate + NADPH + H(+). In terms of biological role, nitrate reductase is a key enzyme involved in the first step of nitrate assimilation in plants, fungi and bacteria. This chain is Nitrate reductase [NADPH] (NIA), found in Beauveria bassiana (White muscardine disease fungus).